Here is a 105-residue protein sequence, read N- to C-terminus: uncharacterized protein (105 aa).

A helical transmembrane segment spans residues Asn29–Ile49.

It is found in the membrane. This is an uncharacterized protein from Saccharomyces cerevisiae (strain ATCC 204508 / S288c) (Baker's yeast).